A 226-amino-acid chain; its full sequence is MLLHIPAIFTAEEVSRIRAALEQAEWADGKATAGYQSAKAKHNLQLPQDHPLAREIGEAMLQRLWNHPLFMSAALPLKVFPPLFNCYTGGGSFDFHIDNAVRDIHGGRERVRTDLSSTLFFSDPEDYDGGELVIQDTYGLQQVKLPAGDLVLYPGTSLHKVNPVTRGARYASFFWTQSLVREDSQRTLLFEMDQSIQRLTRDVPDHPSLIRLTGTYHNLLRRWSEL.

The region spanning 78–178 (KVFPPLFNCY…RYASFFWTQS (101 aa)) is the Fe2OG dioxygenase domain. 3 residues coordinate Fe cation: His-96, Asp-98, and His-159. Position 169 (Arg-169) interacts with 2-oxoglutarate.

Fe(2+) is required as a cofactor. The cofactor is L-ascorbate.

The protein is PKHD-type hydroxylase PLES_48951 of Pseudomonas aeruginosa (strain LESB58).